The following is an 89-amino-acid chain: Small ribosomal subunit protein uS15 (89 aa).

The protein belongs to the universal ribosomal protein uS15 family. As to quaternary structure, part of the 30S ribosomal subunit. Forms a bridge to the 50S subunit in the 70S ribosome, contacting the 23S rRNA.

Functionally, one of the primary rRNA binding proteins, it binds directly to 16S rRNA where it helps nucleate assembly of the platform of the 30S subunit by binding and bridging several RNA helices of the 16S rRNA. Its function is as follows. Forms an intersubunit bridge (bridge B4) with the 23S rRNA of the 50S subunit in the ribosome. This is Small ribosomal subunit protein uS15 from Pelodictyon phaeoclathratiforme (strain DSM 5477 / BU-1).